A 60-amino-acid polypeptide reads, in one-letter code: MDAVSQVPMEVVLPKHILDIWVIVLIILATIVIMTSLLLCPATAVIIYRMRTHPILSGAV.

Residues 20–40 (IWVIVLIILATIVIMTSLLLC) traverse the membrane as a helical segment.

The protein localises to the membrane. This chain is Small integral membrane protein 3 (SMIM3), found in Homo sapiens (Human).